Reading from the N-terminus, the 153-residue chain is 3-dehydroquinate dehydratase (153 aa).

Catalysis depends on Y26, which acts as the Proton acceptor. Substrate is bound by residues N77, H83, and D90. The Proton donor role is filled by H103. Substrate is bound by residues 104–105 (LS) and R114.

It belongs to the type-II 3-dehydroquinase family. As to quaternary structure, homododecamer.

It carries out the reaction 3-dehydroquinate = 3-dehydroshikimate + H2O. It participates in metabolic intermediate biosynthesis; chorismate biosynthesis; chorismate from D-erythrose 4-phosphate and phosphoenolpyruvate: step 3/7. Catalyzes a trans-dehydration via an enolate intermediate. This chain is 3-dehydroquinate dehydratase, found in Colwellia psychrerythraea (strain 34H / ATCC BAA-681) (Vibrio psychroerythus).